A 139-amino-acid polypeptide reads, in one-letter code: MNFKYIVAVSFLIASAYARSVQNDEQSLSQRDVLEEESLREIRGIGGVLLSAGKAALKGLAKVLAEKYANGKRTAEDHEVMKRLEAVMRDLDSLDHPEEASERETRGFNQDEIAKEKRILGPVLGLVGNALGGLIKKIG.

The signal sequence occupies residues 1 to 18 (MNFKYIVAVSFLIASAYA). The propeptide occupies 19–43 (RSVQNDEQSLSQRDVLEEESLREIR). Asn70 bears the Asparagine amide mark. A propeptide spanning residues 74 to 118 (TAEDHEVMKRLEAVMRDLDSLDHPEEASERETRGFNQDEIAKEKR) is cleaved from the precursor. The residue at position 138 (Ile138) is an Isoleucine amide.

It belongs to the bombinin family. In terms of tissue distribution, expressed by the skin glands.

It is found in the secreted. Maximin-4 shows antibacterial activity against both Gram-positive and Gram-negative bacteria. It also shows antimicrobial activity against the fungus C.albicans, but not against A.flavus nor P.uticale. It has little hemolytic activity. It does not possess a significant cytotoxicity against tumor cell lines. It does not possess a significant anti-HIV activity. In terms of biological role, maximin-H3 shows antibacterial activity against both Gram-positive and Gram-negative bacteria. It also shows antimicrobial activity against the fungus C.albicans. Shows strong hemolytic activity. In Bombina maxima (Giant fire-bellied toad), this protein is Maximins 4/H3 type 6.